The sequence spans 284 residues: Tropomyosin alpha-3 chain (284 aa).

Methionine 1 bears the N-acetylmethionine mark. The segment at methionine 1 to glutamate 40 is disordered. The stretch at methionine 1 to isoleucine 284 forms a coiled coil. Residues lysine 12–glutamate 40 show a composition bias toward basic and acidic residues. Threonine 53 carries the phosphothreonine modification. Phosphoserine occurs at positions 61 and 87. A phosphothreonine mark is found at threonine 108 and threonine 252. Tyrosine 261 carries the phosphotyrosine modification. At serine 271 the chain carries Phosphoserine. Threonine 282 carries the phosphothreonine modification. Phosphoserine is present on serine 283.

Belongs to the tropomyosin family. Homodimer. Heterodimer of an alpha (TPM1, TPM3 or TPM4) and a beta (TPM2) chain. Interacts with TMOD1. Interacts with TNNT1.

The protein localises to the cytoplasm. It is found in the cytoskeleton. In terms of biological role, binds to actin filaments in muscle and non-muscle cells. Plays a central role, in association with the troponin complex, in the calcium dependent regulation of vertebrate striated muscle contraction. Smooth muscle contraction is regulated by interaction with caldesmon. In non-muscle cells is implicated in stabilizing cytoskeleton actin filaments. This is Tropomyosin alpha-3 chain (TPM3) from Sus scrofa (Pig).